A 245-amino-acid chain; its full sequence is Eukaryotic translation initiation factor 6 (245 aa).

This sequence belongs to the eIF-6 family. Monomer. Associates with the 60S ribosomal subunit.

The protein resides in the cytoplasm. It is found in the nucleus. It localises to the nucleolus. Binds to the 60S ribosomal subunit and prevents its association with the 40S ribosomal subunit to form the 80S initiation complex in the cytoplasm. May also be involved in ribosome biogenesis. This Tetrahymena thermophila (strain SB210) protein is Eukaryotic translation initiation factor 6.